Here is a 1155-residue protein sequence, read N- to C-terminus: PAN2-PAN3 deadenylation complex catalytic subunit pan2 (1155 aa).

WD repeat units follow at residues 102-145 and 276-315; these read THED…DKLP and ANVS…HFNE. The linker stretch occupies residues 316–452; that stretch reads MSKEVEFADV…GTKLNGEAED (137 aa). The USP domain maps to 453–822; it reads DPLLKYSNVE…VPCVLAYQVK (370 aa). In terms of domain architecture, Exonuclease spans 871–1049; the sequence is VALDTEFVDL…IEDARMALRL (179 aa). Residues D874, E876, D983, and D1042 each contribute to the a divalent metal cation site. The interval 1095-1155 is disordered; it reads TAVTMQNNSG…GDFFGGSPLK (61 aa). A compositionally biased stretch (polar residues) spans 1097-1106; the sequence is VTMQNNSGRN. Low complexity predominate over residues 1107-1124; it reads TPSTPEVTAPTASAPTTP.

It belongs to the peptidase C19 family. PAN2 subfamily. In terms of assembly, forms a heterotrimer with an asymmetric homodimer of the regulatory subunit pan3 to form the poly(A)-nuclease (PAN) deadenylation complex. A divalent metal cation is required as a cofactor.

It localises to the cytoplasm. The catalysed reaction is Exonucleolytic cleavage of poly(A) to 5'-AMP.. With respect to regulation, positively regulated by the regulatory subunit pan3. In terms of biological role, catalytic subunit of the poly(A)-nuclease (PAN) deadenylation complex, one of two cytoplasmic mRNA deadenylases involved in mRNA turnover. PAN specifically shortens poly(A) tails of RNA and the activity is stimulated by poly(A)-binding protein pab1. PAN deadenylation is followed by rapid degradation of the shortened mRNA tails by the CCR4-NOT complex. Deadenylated mRNAs are then degraded by two alternative mechanisms, namely exosome-mediated 3'-5' exonucleolytic degradation, or deadenylation-dependent mRNA decaping and subsequent 5'-3' exonucleolytic degradation by xrn1. May also be involved in post-transcriptional maturation of mRNA poly(A) tails. This Aspergillus oryzae (strain ATCC 42149 / RIB 40) (Yellow koji mold) protein is PAN2-PAN3 deadenylation complex catalytic subunit pan2.